Reading from the N-terminus, the 305-residue chain is Aspartate carbamoyltransferase catalytic subunit (305 aa).

Carbamoyl phosphate-binding residues include Arg-56 and Thr-57. Residue Lys-85 coordinates L-aspartate. 3 residues coordinate carbamoyl phosphate: Arg-106, His-134, and Gln-137. Positions 167 and 227 each coordinate L-aspartate. Carbamoyl phosphate contacts are provided by Leu-266 and Pro-267.

This sequence belongs to the aspartate/ornithine carbamoyltransferase superfamily. ATCase family. Heterooligomer of catalytic and regulatory chains.

It carries out the reaction carbamoyl phosphate + L-aspartate = N-carbamoyl-L-aspartate + phosphate + H(+). Its pathway is pyrimidine metabolism; UMP biosynthesis via de novo pathway; (S)-dihydroorotate from bicarbonate: step 2/3. In terms of biological role, catalyzes the condensation of carbamoyl phosphate and aspartate to form carbamoyl aspartate and inorganic phosphate, the committed step in the de novo pyrimidine nucleotide biosynthesis pathway. The protein is Aspartate carbamoyltransferase catalytic subunit of Thermoplasma acidophilum (strain ATCC 25905 / DSM 1728 / JCM 9062 / NBRC 15155 / AMRC-C165).